The sequence spans 182 residues: Type-1 fimbrial protein, A chain (182 aa).

The signal sequence occupies residues 1-23 (MKIKTLAIVVLSALSLSSTAALA). Cysteine 44 and cysteine 84 form a disulfide bridge.

The protein belongs to the fimbrial protein family.

The protein resides in the fimbrium. Its function is as follows. Fimbriae (also called pili), polar filaments radiating from the surface of the bacterium to a length of 0.5-1.5 micrometers and numbering 100-300 per cell, enable bacteria to colonize the epithelium of specific host organs. This Escherichia coli (strain K12) protein is Type-1 fimbrial protein, A chain (fimA).